The following is a 140-amino-acid chain: UPF0102 protein alr1796 (140 aa).

It belongs to the UPF0102 family.

The sequence is that of UPF0102 protein alr1796 from Nostoc sp. (strain PCC 7120 / SAG 25.82 / UTEX 2576).